We begin with the raw amino-acid sequence, 212 residues long: Orotate phosphoribosyltransferase (212 aa).

5-phospho-alpha-D-ribose 1-diphosphate is bound by residues arginine 94, lysine 98, histidine 100, and 120–128 (EDLISTGGS). Serine 124 serves as a coordination point for orotate.

This sequence belongs to the purine/pyrimidine phosphoribosyltransferase family. PyrE subfamily. Homodimer. It depends on Mg(2+) as a cofactor.

The enzyme catalyses orotidine 5'-phosphate + diphosphate = orotate + 5-phospho-alpha-D-ribose 1-diphosphate. The protein operates within pyrimidine metabolism; UMP biosynthesis via de novo pathway; UMP from orotate: step 1/2. In terms of biological role, catalyzes the transfer of a ribosyl phosphate group from 5-phosphoribose 1-diphosphate to orotate, leading to the formation of orotidine monophosphate (OMP). This Bacillus pumilus (strain SAFR-032) protein is Orotate phosphoribosyltransferase.